Here is a 491-residue protein sequence, read N- to C-terminus: Lysine--tRNA ligase (491 aa).

2 residues coordinate Mg(2+): E398 and E405.

It belongs to the class-II aminoacyl-tRNA synthetase family. As to quaternary structure, homodimer. The cofactor is Mg(2+).

The protein resides in the cytoplasm. The enzyme catalyses tRNA(Lys) + L-lysine + ATP = L-lysyl-tRNA(Lys) + AMP + diphosphate. This Mycoplasmopsis synoviae (strain 53) (Mycoplasma synoviae) protein is Lysine--tRNA ligase.